The following is a 335-amino-acid chain: MGHPLLLPLLLLLHTCVPASWGLRCMQCKSNGDCRVEECALGQDLCRTTIVRMWEEGEELELVEKSCTHSEKTNRTMSYRTGLKITSLTEVVCGLDLCNQGNSGRAVTFSRSRYLECISCGSSDMSCERGRHQSLQCRSPEEQCLDMVTHWIQEGEEGRPKDDRHLRGCGYLPGCPGSNGFHNNDTFHFLKCCNTTKCNEGPILELENLPQNGHQCYSCKGNSTHGCSSEETFLIDCRGPMNQCLVATGTYEPKNQSYMVRGCVTASMCQRAHLGDAFSMNHINVFCCTESGCNHPDLDVQYRKGAAPQPGPAHLSLTITLLMTARLWGGTLLWT.

The first 22 residues, 1-22 (MGHPLLLPLLLLLHTCVPASWG), serve as a signal peptide directing secretion. UPAR/Ly6 domains lie at 23-114 (LRCM…RSRY), 115-213 (LECI…PQNG), and 214-305 (HQCY…YRKG). 3 disulfides stabilise this stretch: cysteine 25–cysteine 46, cysteine 28–cysteine 34, and cysteine 39–cysteine 67. N-linked (GlcNAc...) asparagine glycosylation occurs at asparagine 74. Intrachain disulfides connect cysteine 93–cysteine 98, cysteine 117–cysteine 144, cysteine 120–cysteine 127, cysteine 137–cysteine 169, cysteine 175–cysteine 192, cysteine 193–cysteine 198, cysteine 216–cysteine 244, cysteine 219–cysteine 227, cysteine 237–cysteine 263, cysteine 269–cysteine 287, and cysteine 288–cysteine 293. 4 N-linked (GlcNAc...) asparagine glycosylation sites follow: asparagine 184, asparagine 194, asparagine 222, and asparagine 255. Glycine 305 carries the GPI-anchor amidated glycine lipid modification. Positions 306 to 335 (AAPQPGPAHLSLTITLLMTARLWGGTLLWT) are cleaved as a propeptide — removed in mature form.

Monomer. Interacts (via the UPAR/Ly6 domains) with SRPX2. Interacts with MRC2. Interacts with FAP (seprase); the interaction occurs at the cell surface of invadopodia membrane. Interacts with SORL1 (via N-terminal ectodomain); this interaction decreases PLAUR internalization. The ternary complex composed of PLAUR-PLAU-SERPINE1 also interacts with SORL1.

The protein localises to the cell membrane. It localises to the cell projection. The protein resides in the invadopodium membrane. Functionally, acts as a receptor for urokinase plasminogen activator. Plays a role in localizing and promoting plasmin formation. Mediates the proteolysis-independent signal transduction activation effects of U-PA. It is subject to negative-feedback regulation by U-PA which cleaves it into an inactive form. The protein is Urokinase plasminogen activator surface receptor (PLAUR) of Chlorocebus aethiops (Green monkey).